The primary structure comprises 288 residues: Probable prolyl 4-hydroxylase 9 (288 aa).

Residues 1 to 12 (MKSRLKSYRRKK) are Cytoplasmic-facing. The chain crosses the membrane as a helical; Signal-anchor for type II membrane protein span at residues 13 to 33 (LGLATVIVFCSLCFLFGFYGS). At 34-288 (TLLSQNVPRV…KWIRDQDQEE (255 aa)) the chain is on the lumenal side. Positions 164–283 (HGESFNILRY…KWVATKWIRD (120 aa)) constitute a Fe2OG dioxygenase domain. Residues His182 and Asp184 each coordinate Fe cation. 2 N-linked (GlcNAc...) asparagine glycosylation sites follow: Asn221 and Asn255. His264 contributes to the Fe cation binding site. Lys274 serves as a coordination point for 2-oxoglutarate.

It belongs to the P4HA family. Fe(2+) is required as a cofactor. The cofactor is L-ascorbate.

The protein localises to the endoplasmic reticulum membrane. The protein resides in the golgi apparatus. The enzyme catalyses L-prolyl-[collagen] + 2-oxoglutarate + O2 = trans-4-hydroxy-L-prolyl-[collagen] + succinate + CO2. Functionally, catalyzes the post-translational formation of 4-hydroxyproline in -Xaa-Pro-Gly- sequences in proline-rich peptide sequences of plant glycoproteins and other proteins. Hydroxyprolines are important constituent of many plant cell wall glycoproteins such as extensins, hydroxyproline-rich glycoproteins, lectins and arabinogalactan proteins. The polypeptide is Probable prolyl 4-hydroxylase 9 (Arabidopsis thaliana (Mouse-ear cress)).